The sequence spans 100 residues: NADH-quinone oxidoreductase subunit K (100 aa).

3 helical membrane-spanning segments follow: residues 4 to 24, 28 to 48, and 60 to 80; these read LQHG…GLII, LLFM…AFVV, and VMYI…LALL.

It belongs to the complex I subunit 4L family. As to quaternary structure, NDH-1 is composed of 13 different subunits. Subunits NuoA, H, J, K, L, M, N constitute the membrane sector of the complex.

The protein resides in the cell inner membrane. The catalysed reaction is a quinone + NADH + 5 H(+)(in) = a quinol + NAD(+) + 4 H(+)(out). Functionally, NDH-1 shuttles electrons from NADH, via FMN and iron-sulfur (Fe-S) centers, to quinones in the respiratory chain. The immediate electron acceptor for the enzyme in this species is believed to be ubiquinone. Couples the redox reaction to proton translocation (for every two electrons transferred, four hydrogen ions are translocated across the cytoplasmic membrane), and thus conserves the redox energy in a proton gradient. This Yersinia enterocolitica serotype O:8 / biotype 1B (strain NCTC 13174 / 8081) protein is NADH-quinone oxidoreductase subunit K.